The primary structure comprises 261 residues: Putative imidazole glycerol phosphate synthase subunit hisF2 (261 aa).

Asp138 is a catalytic residue.

It belongs to the HisA/HisF family. Heterodimer of HisH and HisF.

The protein resides in the cytoplasm. The catalysed reaction is 5-[(5-phospho-1-deoxy-D-ribulos-1-ylimino)methylamino]-1-(5-phospho-beta-D-ribosyl)imidazole-4-carboxamide + L-glutamine = D-erythro-1-(imidazol-4-yl)glycerol 3-phosphate + 5-amino-1-(5-phospho-beta-D-ribosyl)imidazole-4-carboxamide + L-glutamate + H(+). The protein operates within amino-acid biosynthesis; L-histidine biosynthesis; L-histidine from 5-phospho-alpha-D-ribose 1-diphosphate: step 5/9. In terms of biological role, IGPS catalyzes the conversion of PRFAR and glutamine to IGP, AICAR and glutamate. The HisF subunit catalyzes the cyclization activity that produces IGP and AICAR from PRFAR using the ammonia provided by the HisH subunit. The sequence is that of Putative imidazole glycerol phosphate synthase subunit hisF2 (hisF2) from Prochlorococcus marinus (strain MIT 9313).